Here is a 251-residue protein sequence, read N- to C-terminus: Segregation and condensation protein A (251 aa).

The protein belongs to the ScpA family. In terms of assembly, component of a cohesin-like complex composed of ScpA, ScpB and the Smc homodimer, in which ScpA and ScpB bind to the head domain of Smc. The presence of the three proteins is required for the association of the complex with DNA.

The protein localises to the cytoplasm. Its function is as follows. Participates in chromosomal partition during cell division. May act via the formation of a condensin-like complex containing Smc and ScpB that pull DNA away from mid-cell into both cell halves. The chain is Segregation and condensation protein A from Clostridium botulinum (strain Alaska E43 / Type E3).